We begin with the raw amino-acid sequence, 681 residues long: DNA ligase (681 aa).

Residues 44–48, 94–95, and Glu-124 contribute to the NAD(+) site; these read DYIYD and SL. The active-site N6-AMP-lysine intermediate is Lys-126. NAD(+)-binding residues include Arg-147, Glu-181, Lys-297, and Lys-321. Zn(2+) is bound by residues Cys-415, Cys-418, Cys-433, and Cys-438. The BRCT domain occupies 598-681; sequence DETSFFYGKK…EAQAKEGTDK (84 aa).

This sequence belongs to the NAD-dependent DNA ligase family. LigA subfamily. Mg(2+) is required as a cofactor. Requires Mn(2+) as cofactor.

The enzyme catalyses NAD(+) + (deoxyribonucleotide)n-3'-hydroxyl + 5'-phospho-(deoxyribonucleotide)m = (deoxyribonucleotide)n+m + AMP + beta-nicotinamide D-nucleotide.. In terms of biological role, DNA ligase that catalyzes the formation of phosphodiester linkages between 5'-phosphoryl and 3'-hydroxyl groups in double-stranded DNA using NAD as a coenzyme and as the energy source for the reaction. It is essential for DNA replication and repair of damaged DNA. The sequence is that of DNA ligase from Leuconostoc citreum (strain KM20).